The primary structure comprises 237 residues: Class B acid phosphatase (237 aa).

Positions Met1–Ala23 are cleaved as a signal peptide. Asp69 (nucleophile) is an active-site residue. Positions 69 and 71 each coordinate Mg(2+). The Proton donor role is filled by Asp71. Substrate contacts are provided by residues Thr137–Gly138 and Lys177. Mg(2+) is bound at residue Asp192.

The protein belongs to the class B bacterial acid phosphatase family. In terms of assembly, homotetramer. The cofactor is Mg(2+).

The protein localises to the periplasm. The catalysed reaction is a phosphate monoester + H2O = an alcohol + phosphate. In terms of biological role, dephosphorylates several organic phosphate monoesters. Also has a phosphotransferase activity catalyzing the transfer of low-energy phosphate groups from organic phosphate monoesters to free hydroxyl groups of various organic compounds. This is Class B acid phosphatase from Proteus mirabilis (strain HI4320).